A 380-amino-acid chain; its full sequence is Glucose-1-phosphate adenylyltransferase (380 aa).

Residues G164, 179–180, and S190 contribute to the alpha-D-glucose 1-phosphate site; that span reads EK.

This sequence belongs to the bacterial/plant glucose-1-phosphate adenylyltransferase family. Homotetramer.

The catalysed reaction is alpha-D-glucose 1-phosphate + ATP + H(+) = ADP-alpha-D-glucose + diphosphate. It functions in the pathway glycan biosynthesis; glycogen biosynthesis. Its function is as follows. Involved in the biosynthesis of ADP-glucose, a building block required for the elongation reactions to produce glycogen. Catalyzes the reaction between ATP and alpha-D-glucose 1-phosphate (G1P) to produce pyrophosphate and ADP-Glc. The protein is Glucose-1-phosphate adenylyltransferase of Streptococcus gordonii (strain Challis / ATCC 35105 / BCRC 15272 / CH1 / DL1 / V288).